Reading from the N-terminus, the 93-residue chain is WAP four-disulfide core domain protein 13 (93 aa).

A signal peptide spans 1–22 (MKPVLPLQFLVVFCLALQLVPG). Residues 24–73 (PKQRVLKYILEPPPCISAPENCTHLCTMQEDCEKGFQCCSSFCGIVCSSE) enclose the WAP; atypical domain. 3 cysteine pairs are disulfide-bonded: Cys45–Cys66, Cys49–Cys61, and Cys55–Cys70.

It localises to the secreted. Its function is as follows. Putative acid-stable proteinase inhibitor. The chain is WAP four-disulfide core domain protein 13 (WFDC13) from Homo sapiens (Human).